A 359-amino-acid polypeptide reads, in one-letter code: Anhydro-N-acetylmuramic acid kinase (359 aa).

12 to 19 is an ATP binding site; sequence GTSLDGVD.

This sequence belongs to the anhydro-N-acetylmuramic acid kinase family.

It carries out the reaction 1,6-anhydro-N-acetyl-beta-muramate + ATP + H2O = N-acetyl-D-muramate 6-phosphate + ADP + H(+). The protein operates within amino-sugar metabolism; 1,6-anhydro-N-acetylmuramate degradation. It functions in the pathway cell wall biogenesis; peptidoglycan recycling. Functionally, catalyzes the specific phosphorylation of 1,6-anhydro-N-acetylmuramic acid (anhMurNAc) with the simultaneous cleavage of the 1,6-anhydro ring, generating MurNAc-6-P. Is required for the utilization of anhMurNAc either imported from the medium or derived from its own cell wall murein, and thus plays a role in cell wall recycling. This Sulfurovum sp. (strain NBC37-1) protein is Anhydro-N-acetylmuramic acid kinase.